Here is a 940-residue protein sequence, read N- to C-terminus: Leucine--tRNA ligase, mitochondrial (940 aa).

The 'HIGH' region motif lies at 54 to 64 (PYPSGALHMGH). The short motif at 638–642 (TINKL) is the 'KMSKS' region element. Lys-641 lines the ATP pocket. A disordered region spans residues 724 to 744 (KEQHQHQQQQHQQPLPSSEFN).

The protein belongs to the class-I aminoacyl-tRNA synthetase family.

It is found in the mitochondrion. The enzyme catalyses tRNA(Leu) + L-leucine + ATP = L-leucyl-tRNA(Leu) + AMP + diphosphate. The chain is Leucine--tRNA ligase, mitochondrial (mleuS) from Dictyostelium discoideum (Social amoeba).